We begin with the raw amino-acid sequence, 506 residues long: Maturase K (506 aa).

Belongs to the intron maturase 2 family. MatK subfamily.

The protein resides in the plastid. Its subcellular location is the chloroplast. Functionally, usually encoded in the trnK tRNA gene intron. Probably assists in splicing its own and other chloroplast group II introns. The chain is Maturase K from Melilotus albus (White sweet clover).